Here is a 286-residue protein sequence, read N- to C-terminus: ATP synthase gamma chain (286 aa).

The protein belongs to the ATPase gamma chain family. In terms of assembly, F-type ATPases have 2 components, CF(1) - the catalytic core - and CF(0) - the membrane proton channel. CF(1) has five subunits: alpha(3), beta(3), gamma(1), delta(1), epsilon(1). CF(0) has three main subunits: a, b and c.

It is found in the cell inner membrane. In terms of biological role, produces ATP from ADP in the presence of a proton gradient across the membrane. The gamma chain is believed to be important in regulating ATPase activity and the flow of protons through the CF(0) complex. The polypeptide is ATP synthase gamma chain (Flavobacterium johnsoniae (strain ATCC 17061 / DSM 2064 / JCM 8514 / BCRC 14874 / CCUG 350202 / NBRC 14942 / NCIMB 11054 / UW101) (Cytophaga johnsonae)).